The chain runs to 685 residues: Methionine--tRNA ligase (685 aa).

The Zn(2+) site is built by cysteine 142, cysteine 145, cysteine 155, and cysteine 158. Positions 330 to 334 match the 'KMSKS' region motif; sequence KMSKS. An ATP-binding site is contributed by lysine 333. One can recognise a tRNA-binding domain in the interval 584 to 685; the sequence is DFIKVDLRVA…SGAKPGDKVS (102 aa).

It belongs to the class-I aminoacyl-tRNA synthetase family. MetG type 1 subfamily. Homodimer. Zn(2+) is required as a cofactor.

Its subcellular location is the cytoplasm. The enzyme catalyses tRNA(Met) + L-methionine + ATP = L-methionyl-tRNA(Met) + AMP + diphosphate. Is required not only for elongation of protein synthesis but also for the initiation of all mRNA translation through initiator tRNA(fMet) aminoacylation. This chain is Methionine--tRNA ligase, found in Acinetobacter baylyi (strain ATCC 33305 / BD413 / ADP1).